A 174-amino-acid chain; its full sequence is Flavodoxin (174 aa).

Residues 4-166 (IGIFFGSDTG…RIIQWTKKIK (163 aa)) enclose the Flavodoxin-like domain.

The protein belongs to the flavodoxin family. It depends on FMN as a cofactor.

In terms of biological role, low-potential electron donor to a number of redox enzymes. This chain is Flavodoxin (fldA), found in Buchnera aphidicola subsp. Baizongia pistaciae (strain Bp).